The chain runs to 206 residues: Large ribosomal subunit protein uL4 (206 aa).

Positions 63-97 (MYKQKGTGRARHHSARAPQFRGGGKAHGPVVRSHE) are disordered. Residues 64–77 (YKQKGTGRARHHSA) show a composition bias toward basic residues.

It belongs to the universal ribosomal protein uL4 family. Part of the 50S ribosomal subunit.

Functionally, one of the primary rRNA binding proteins, this protein initially binds near the 5'-end of the 23S rRNA. It is important during the early stages of 50S assembly. It makes multiple contacts with different domains of the 23S rRNA in the assembled 50S subunit and ribosome. In terms of biological role, forms part of the polypeptide exit tunnel. The sequence is that of Large ribosomal subunit protein uL4 from Rhizobium etli (strain ATCC 51251 / DSM 11541 / JCM 21823 / NBRC 15573 / CFN 42).